Here is a 343-residue protein sequence, read N- to C-terminus: 3-isopropylmalate dehydrogenase (343 aa).

Substrate contacts are provided by Arg-94, Arg-104, Arg-128, and Asp-218. Mg(2+)-binding residues include Asp-218, Asp-242, and Asp-246. 278–290 (GSAPDIAGQNKAN) lines the NAD(+) pocket.

It belongs to the isocitrate and isopropylmalate dehydrogenases family. LeuB type 2 subfamily. As to quaternary structure, homodimer. Mg(2+) serves as cofactor. The cofactor is Mn(2+).

The protein resides in the cytoplasm. It catalyses the reaction (2R,3S)-3-isopropylmalate + NAD(+) = 4-methyl-2-oxopentanoate + CO2 + NADH. It participates in amino-acid biosynthesis; L-leucine biosynthesis; L-leucine from 3-methyl-2-oxobutanoate: step 3/4. Functionally, catalyzes the oxidation of 3-carboxy-2-hydroxy-4-methylpentanoate (3-isopropylmalate) to 3-carboxy-4-methyl-2-oxopentanoate. The product decarboxylates to 4-methyl-2 oxopentanoate. This Bifidobacterium longum (strain DJO10A) protein is 3-isopropylmalate dehydrogenase.